Here is a 30-residue protein sequence, read N- to C-terminus: Putative UPF0377 protein YNR075C-A (30 aa).

It belongs to the UPF0377 family.

The sequence is that of Putative UPF0377 protein YNR075C-A from Saccharomyces cerevisiae (strain ATCC 204508 / S288c) (Baker's yeast).